The sequence spans 239 residues: MFQRLNKMFVGEVTTSSSHEPEFSEKEDDEWILVDFIDTCTGFSAEEEEEDEDIGEESSAEHTSVFSCLPTSLECLADTSDSCFLQFESCPMEESWFITPPPCFTAGGLTTIKVETSPMENLLIEHPSMSVYAVHNSCPGLSEASCGNDDYNSSGPRMEAQSELGTHIHCCVAALAAQATFLEQPKSFRPSQWIKGHSERQSLNRNGLRRQNLTRDCHTRQMKHRCWAVHQPCPRQYNY.

The LIR signature appears at 25–37 (EKEDDEWILVDFI).

Interacts with p53/TP53 and HIPK2. Interacts with PRKCG, GABARAP, GABARAPL1, GABARAPL2, MAP1LC3A, MAP1LC3B and MAP1LC3C. As to expression, specifically expressed by acinar cells of chronic pancreatitis tissue.

It localises to the cytoplasm. Its subcellular location is the cytosol. The protein localises to the nucleus. The protein resides in the PML body. It is found in the cytoplasmic vesicle. It localises to the autophagosome. Its function is as follows. Antiproliferative and proapoptotic protein involved in cell stress response which acts as a dual regulator of transcription and autophagy. Acts as a positive regulator of autophagy. In response to cellular stress or activation of autophagy, relocates to autophagosomes where it interacts with autophagosome-associated proteins GABARAP, GABARAPL1/L2, MAP1LC3A/B/C and regulates autophagy. Acts as an antioxidant and plays a major role in p53/TP53-driven oxidative stress response. Possesses both a p53/TP53-independent intracellular reactive oxygen species (ROS) regulatory function and a p53/TP53-dependent transcription regulatory function. Positively regulates p53/TP53 and p73/TP73 and stimulates their capacity to induce apoptosis and regulate cell cycle. In response to double-strand DNA breaks, promotes p53/TP53 phosphorylation on 'Ser-46' and subsequent apoptosis. Acts as a tumor suppressor by inducing cell death by an autophagy and caspase-dependent mechanism. Can reduce cell migration by regulating the expression of SPARC. In Rattus norvegicus (Rat), this protein is Tumor protein p53-inducible nuclear protein 1 (Trp53inp1).